A 561-amino-acid chain; its full sequence is Putative transport protein YbjL (561 aa).

A run of 5 helical transmembrane segments spans residues 8 to 28, 32 to 52, 66 to 86, 94 to 114, and 158 to 178; these read LLNGNYILLLFVVLALGLCLG, LGSIQLGNSIGVLVVSLLLGQ, FMLFIFCVGVEAGPNFFSIFF, MLALVMVGSALLIALGLGKLF, and NLSLGYALTYLIGLVSLIVGA. 2 RCK C-terminal domains span residues 202 to 288 and 292 to 373; these read LDTD…SFRN and VFDR…RIGF. A run of 5 helical transmembrane segments spans residues 383–403, 406–426, 451–471, 475–495, and 540–560; these read LLAFCAFFIIGLMIGMITFQF, FSFGMGNAAGLLFAGIMLGFM, VFMAGVGLSAGSGINNGLGAI, MLVAGLIVSLVPVVICFLFGA, and AIANVLLTLAGTIIVMVWPGL.

The protein belongs to the AAE transporter (TC 2.A.81) family. YbjL subfamily.

It is found in the cell membrane. The protein is Putative transport protein YbjL of Escherichia fergusonii (strain ATCC 35469 / DSM 13698 / CCUG 18766 / IAM 14443 / JCM 21226 / LMG 7866 / NBRC 102419 / NCTC 12128 / CDC 0568-73).